The primary structure comprises 360 residues: E3 ubiquitin-protein ligase HAKAI homolog (360 aa).

The segment covering Met-1–Pro-11 has biased composition (basic and acidic residues). A disordered region spans residues Met-1–Glu-24. An RING-type zinc finger spans residues Cys-72 to Asp-107. The C2H2-type zinc finger occupies Phe-123–His-148. The tract at residues Ala-156–Glu-360 is disordered. 3 stretches are compositionally biased toward polar residues: residues Gln-163–Thr-179, Ser-186–Pro-214, and Tyr-270–Asn-283. Positions Glu-293–Gly-304 are enriched in low complexity.

Belongs to the Hakai family. In terms of assembly, interacts with MTB and VIR. Associates with MTA, MTB, FIP37 and VIR to form the m6A writer complex which is essential for adenosine methylation at specific mRNA sequences.

The protein localises to the nucleus speckle. It localises to the nucleus. The protein resides in the nucleoplasm. It carries out the reaction S-ubiquitinyl-[E2 ubiquitin-conjugating enzyme]-L-cysteine + [acceptor protein]-L-lysine = [E2 ubiquitin-conjugating enzyme]-L-cysteine + N(6)-ubiquitinyl-[acceptor protein]-L-lysine.. In terms of biological role, probable E3 ubiquitin-protein ligase which is a subunit of the N6-methyltransferase complex, a multiprotein complex that mediates N6-methyladenosine (m6A) methylation at the 5'-[AG]GAC-3' consensus sites of some mRNAs. Associates with MTA, MTB, FIP37 and VIR to form the m6A writer complex which is essential for adenosine methylation at specific mRNA sequences. N6-methyladenosine (m6A) plays a role in mRNA stability, processing, translation efficiency and editing. This chain is E3 ubiquitin-protein ligase HAKAI homolog, found in Arabidopsis thaliana (Mouse-ear cress).